The chain runs to 1150 residues: Solute carrier family 12 member 6 (1150 aa).

At 1 to 135 (MHPPETTTKM…DEYFDKNLAL (135 aa)) the chain is on the cytoplasmic side. The segment at 20–66 (TKIDDIPGLSDTSPDLSSRSSSRVRFSSRESVPETSRSEPMSEMSGA) is disordered. The segment covering 28-45 (LSDTSPDLSSRSSSRVRF) has biased composition (low complexity). 2 positions are modified to phosphoserine: Ser32 and Ser120. The discontinuously helical transmembrane segment at 136-158 (FEEEMDTRPKVSSLLNRMANYTN) threads the bilayer. K(+)-binding residues include Ser147 and Ser148. Ser148 is subject to Phosphoserine. Chloride is bound at residue Asn151. The Extracellular segment spans residues 159 to 165 (LTQGAKE). Residues 161-181 (QGAKEHEEAENITEGKKKPTK) are disordered. Residues 163–177 (AKEHEEAENITEGKK) show a composition bias toward basic and acidic residues. A helical membrane pass occupies residues 166 to 188 (HEEAENITEGKKKPTKTPQMGTF). Residues 189 to 211 (MGVYLPCLQNIFGVILFLRLTWV) lie on the Cytoplasmic side of the membrane. A helical membrane pass occupies residues 212–245 (VGTAGVLQAFAIVLICCCCTMLTAISMSAIATNG). The Extracellular portion of the chain corresponds to 246-263 (VVPAGGSYFMISRALGPE). A run of 2 helical transmembrane segments spans residues 264 to 287 (FGGAVGLCFYLGTTFAAAMYILGA) and 288 to 316 (IEIFLVYIVPRAAIFHSDDALKESAAMLN). At 317-433 (NMRVYGTAFL…FVHNNVTSIQ (117 aa)) the chain is on the extracellular side. Cys375 and Cys390 are disulfide-bonded. N-linked (GlcNAc...) asparagine glycans are attached at residues Asn379, Asn398, Asn411, and Asn428. Cysteines 410 and 420 form a disulfide. A helical membrane pass occupies residues 434-454 (GIPGLASGIITENLWSNYLPK). Residues Ile443, Thr444, and Asn446 each coordinate K(+). Chloride-binding residues include Ile443 and Thr444. Positions 447 and 448 each coordinate chloride. Residues 455–464 (GEIIEKPSAK) lie on the Cytoplasmic side of the membrane. The helical transmembrane segment at 465–487 (SSDVLGSLNHEYVLVDITTSFTL) threads the bilayer. The Extracellular portion of the chain corresponds to 488-518 (LVGIFFPSVTGIMAGSNRSGDLKDAQKSIPI). The chain crosses the membrane as a helical span at residues 519–545 (GTILAILTTSFVYLSNVVLFGACIEGV). Residues 546 to 568 (VLRDKFGDAVKGNLVVGTLSWPS) are Cytoplasmic-facing. 2 consecutive transmembrane segments (helical) span residues 569-589 (PWVIVIGSFFSTCGAGLQSLT) and 590-612 (GAPRLLQAIAKDNIIPFLRVFGH). Position 603 (Ile603) interacts with chloride. Topologically, residues 613–629 (SKANGEPTWALLLTAAI) are cytoplasmic. 2 helical membrane-spanning segments follow: residues 630 to 649 (AELGILIASLDLVAPILSMF) and 650 to 665 (FLMCYLFVNLACALQT). Residues 666–1150 (LLRTPNWRPR…GGSEVITIYS (485 aa)) are Cytoplasmic-facing. Residues 682–691 (ALSFMGMSIC) are scissor helix. The residue at position 736 (Ser736) is a Phosphoserine. Position 778 is a phosphothreonine (Thr778). The residue at position 981 (Ser981) is a Phosphoserine. Thr991 is modified (phosphothreonine; by OXSR1 and STK39). A phosphoserine mark is found at Ser1023, Ser1029, and Ser1032. A Phosphothreonine; by OXSR1 and STK39 modification is found at Thr1048. At Tyr1121 the chain carries Phosphotyrosine. The interval 1133 to 1150 (ERVLLVRGGGSEVITIYS) is interaction with CKB.

Belongs to the SLC12A transporter family. K/Cl co-transporter subfamily. In terms of assembly, homodimer; adopts a domain-swap conformation at the scissor helices connecting the transmembrane domain and C-terminal domain. Heterodimer with K-Cl cotransporter SLC12A5. Interacts (via C-terminus) with CKB; the interaction may be required for potassium-chloride cotransport activity. Phosphorylated, phosphorylation regulates transporter activity. Phosphorylated at Thr-991 and Thr-1048 by OXSR1/OSR1 and STK39/SPAK downstream of WNK kinases (WNK1, WNK2, WNK3 or WNK4), inhibiting the potassium-chloride cotransport activity. Post-translationally, N-glycosylated. In terms of tissue distribution, expressed in brain (at protein level). Highly expressed in heart, brain and kidney. Detected at lower levels in skeletal muscle, placenta, lung and pancreas. Detected in umbilical vein endothelial cells. More abundant in kidney. As to expression, testis specific.

The protein resides in the cell membrane. It localises to the basolateral cell membrane. The enzyme catalyses K(+)(in) + chloride(in) = K(+)(out) + chloride(out). Its activity is regulated as follows. Inhibited following phosphorylation by OXSR1/OSR1 and STK39/SPAK: phosphorylation takes place downstream of WNK kinases (WNK1, WNK2, WNK3 or WNK4) in response to hyperosmotic stress and subsequent cell shrinkage. Activated by N-ethylmaleimide (NEM). Inhibited by DIOA, bumetanide and furosemide. Mediates electroneutral potassium-chloride cotransport when activated by cell swelling. May contribute to cell volume homeostasis in single cells. Its function is as follows. Mediates electroneutral potassium-chloride cotransport when activated by cell swelling. May contribute to cell volume homeostasis in single cells. Functionally, mediates electroneutral potassium-chloride cotransport when activated by cell swelling. May contribute to cell volume homeostasis in single cells. The sequence is that of Solute carrier family 12 member 6 from Homo sapiens (Human).